The primary structure comprises 861 residues: FO synthase (861 aa).

Radical SAM core domains lie at 69-319 (ITYS…LQAP) and 528-763 (VTYI…LLHP). The interval 70–401 (TYSKSVFIPL…PRLLPHVRAL (332 aa)) is cofG-like. [4Fe-4S] cluster-binding residues include cysteine 83, cysteine 87, cysteine 90, cysteine 542, cysteine 546, and cysteine 549. The interval 505-838 (DGPALDALTR…KPRTTLYGEV (334 aa)) is cofH-like.

The protein in the N-terminal section; belongs to the radical SAM superfamily. CofG family. In the C-terminal section; belongs to the radical SAM superfamily. CofH family. [4Fe-4S] cluster serves as cofactor.

The enzyme catalyses 5-amino-6-(D-ribitylamino)uracil + L-tyrosine + S-adenosyl-L-methionine = 5-amino-5-(4-hydroxybenzyl)-6-(D-ribitylimino)-5,6-dihydrouracil + 2-iminoacetate + 5'-deoxyadenosine + L-methionine + H(+). The catalysed reaction is 5-amino-5-(4-hydroxybenzyl)-6-(D-ribitylimino)-5,6-dihydrouracil + S-adenosyl-L-methionine = 7,8-didemethyl-8-hydroxy-5-deazariboflavin + 5'-deoxyadenosine + L-methionine + NH4(+) + H(+). It participates in cofactor biosynthesis; coenzyme F0 biosynthesis. Its function is as follows. Catalyzes the radical-mediated synthesis of 7,8-didemethyl-8-hydroxy-5-deazariboflavin (FO) from 5-amino-6-(D-ribitylamino)uracil and L-tyrosine. The sequence is that of FO synthase (fbiC) from Streptomyces avermitilis (strain ATCC 31267 / DSM 46492 / JCM 5070 / NBRC 14893 / NCIMB 12804 / NRRL 8165 / MA-4680).